Reading from the N-terminus, the 691-residue chain is Elongation factor G (691 aa).

The tr-type G domain occupies 8-283 (EDYRNIGIMA…AVVDFLPSPL (276 aa)). Residues 17 to 24 (AHIDAGKT), 81 to 85 (DTPGH), and 135 to 138 (NKMD) contribute to the GTP site.

It belongs to the TRAFAC class translation factor GTPase superfamily. Classic translation factor GTPase family. EF-G/EF-2 subfamily.

It localises to the cytoplasm. Its function is as follows. Catalyzes the GTP-dependent ribosomal translocation step during translation elongation. During this step, the ribosome changes from the pre-translocational (PRE) to the post-translocational (POST) state as the newly formed A-site-bound peptidyl-tRNA and P-site-bound deacylated tRNA move to the P and E sites, respectively. Catalyzes the coordinated movement of the two tRNA molecules, the mRNA and conformational changes in the ribosome. This Parvibaculum lavamentivorans (strain DS-1 / DSM 13023 / NCIMB 13966) protein is Elongation factor G.